Here is a 781-residue protein sequence, read N- to C-terminus: Acyl-CoA dehydrogenase family member 11 (781 aa).

Lys177 is modified (N6-acetyllysine). Phosphotyrosine is present on Tyr325. Lys392 is modified (N6-succinyllysine). FAD-binding positions include 505–515 (FCMTEPDVASS), 513–515 (ASS), 539–541 (WSS), and Ser541. Substrate is bound at residue Ser515. A substrate-binding site is contributed by 630–633 (GPGR). FAD is bound by residues Arg658, Gln728, and 728–732 (QVCGG). Gly756 provides a ligand contact to substrate. FAD-binding positions include 757-759 (PDE) and Glu759.

It belongs to the acyl-CoA dehydrogenase family. In terms of assembly, homodimer. FAD serves as cofactor.

The protein localises to the peroxisome. Its subcellular location is the mitochondrion membrane. It carries out the reaction a 2,3-saturated acyl-CoA + oxidized [electron-transfer flavoprotein] + H(+) = a (2E)-enoyl-CoA + reduced [electron-transfer flavoprotein]. The enzyme catalyses docosanoyl-CoA + oxidized [electron-transfer flavoprotein] + H(+) = (2E)-docosenoyl-CoA + reduced [electron-transfer flavoprotein]. The catalysed reaction is tetracosanoyl-CoA + oxidized [electron-transfer flavoprotein] + H(+) = (2E)-tetracosenoyl-CoA + reduced [electron-transfer flavoprotein]. It catalyses the reaction eicosanoyl-CoA + oxidized [electron-transfer flavoprotein] + H(+) = (2E)-eicosenoyl-CoA + reduced [electron-transfer flavoprotein]. It carries out the reaction hexacosanoyl-CoA + oxidized [electron-transfer flavoprotein] + H(+) = (2E)-hexacosenoyl-CoA + reduced [electron-transfer flavoprotein]. The enzyme catalyses tricosanoyl-CoA + oxidized [electron-transfer flavoprotein] + H(+) = (2E)-tricosenoyl-CoA + reduced [electron-transfer flavoprotein]. It functions in the pathway lipid metabolism; fatty acid beta-oxidation. Acyl-CoA dehydrogenase, that exhibits maximal activity towards saturated C22-CoA. Probably participates in beta-oxydation and energy production but could also play a role in the metabolism of specific fatty acids to control fatty acids composition of cellular lipids in brain. The protein is Acyl-CoA dehydrogenase family member 11 (ACAD11) of Pongo abelii (Sumatran orangutan).